The sequence spans 116 residues: Large ribosomal subunit protein uL22 (116 aa).

The protein belongs to the universal ribosomal protein uL22 family. In terms of assembly, part of the 50S ribosomal subunit.

This protein binds specifically to 23S rRNA; its binding is stimulated by other ribosomal proteins, e.g. L4, L17, and L20. It is important during the early stages of 50S assembly. It makes multiple contacts with different domains of the 23S rRNA in the assembled 50S subunit and ribosome. In terms of biological role, the globular domain of the protein is located near the polypeptide exit tunnel on the outside of the subunit, while an extended beta-hairpin is found that lines the wall of the exit tunnel in the center of the 70S ribosome. The chain is Large ribosomal subunit protein uL22 from Wolbachia pipientis subsp. Culex pipiens (strain wPip).